The sequence spans 120 residues: Crustacean hyperglycemic hormones 1 (120 aa).

The signal sequence occupies residues 1–27; the sequence is MTAFRMVWSMLLASLLMLLVASSTAPA. 3 cysteine pairs are disulfide-bonded: Cys-53–Cys-89, Cys-69–Cys-85, and Cys-72–Cys-98. Residue Val-118 is modified to Valine amide.

It belongs to the arthropod CHH/MIH/GIH/VIH hormone family.

Its subcellular location is the secreted. Hormone found in the sinus gland of isopods and decapods which controls the blood sugar level. Has a secretagogue action over the amylase released from the midgut gland. May act as a stress hormone and may be involved in the control of molting and reproduction. The sequence is that of Crustacean hyperglycemic hormones 1 (CHH1) from Penaeus monodon (Giant tiger prawn).